The chain runs to 493 residues: Farnesoate epoxidase (493 aa).

Positions 1–24 (MLALIVLCFILFFYIISRRHRGLC) are cleaved as a signal peptide. Cys433 contributes to the heme binding site.

This sequence belongs to the cytochrome P450 family. Heme is required as a cofactor. Constitutively expressed in corpora allata from the first instar larval to adult stages.

It carries out the reaction (2E,6E)-farnesoate + reduced [NADPH--hemoprotein reductase] + O2 = juvenile hormone III carboxylate + oxidized [NADPH--hemoprotein reductase] + H2O + H(+). Its function is as follows. Catalyzes the conversion of farnesoate to juvenile hormone III acid in juvenile hormone biosynthesis. This Bombyx mori (Silk moth) protein is Farnesoate epoxidase.